Consider the following 473-residue polypeptide: Cephalotoxin-like protein (473 aa).

Residues 1 to 21 (RWLGWQKFCWISCLFSSISSG) form the signal peptide. Coiled-coil stretches lie at residues 40 to 60 (AINAINEEYIAQAKAIEEALK) and 116 to 147 (LINERFNEVNAKLDRIDEKLDEMEKSIKADTA).

In terms of tissue distribution, component of the acid-insoluble and acid-soluble organic matrix of the aragonitic skeleton (at protein level).

It is found in the secreted. The chain is Cephalotoxin-like protein from Acropora millepora (Staghorn coral).